Here is a 142-residue protein sequence, read N- to C-terminus: Small ribosomal subunit protein uS9c (142 aa).

It belongs to the universal ribosomal protein uS9 family.

It localises to the plastid. It is found in the chloroplast. The chain is Small ribosomal subunit protein uS9c (rps9) from Stigeoclonium helveticum (Green alga).